Consider the following 557-residue polypeptide: Formate--tetrahydrofolate ligase (557 aa).

An ATP-binding site is contributed by 65 to 72 (TPAGEGKT).

The protein belongs to the formate--tetrahydrofolate ligase family.

It catalyses the reaction (6S)-5,6,7,8-tetrahydrofolate + formate + ATP = (6R)-10-formyltetrahydrofolate + ADP + phosphate. Its pathway is one-carbon metabolism; tetrahydrofolate interconversion. The chain is Formate--tetrahydrofolate ligase from Methylorubrum extorquens (strain PA1) (Methylobacterium extorquens).